The chain runs to 155 residues: Peptide deformylase (155 aa).

Fe cation-binding residues include Cys88 and His130. The active site involves Glu131. A Fe cation-binding site is contributed by His134.

It belongs to the polypeptide deformylase family. Fe(2+) is required as a cofactor.

The enzyme catalyses N-terminal N-formyl-L-methionyl-[peptide] + H2O = N-terminal L-methionyl-[peptide] + formate. Removes the formyl group from the N-terminal Met of newly synthesized proteins. Requires at least a dipeptide for an efficient rate of reaction. N-terminal L-methionine is a prerequisite for activity but the enzyme has broad specificity at other positions. The protein is Peptide deformylase of Pelotomaculum thermopropionicum (strain DSM 13744 / JCM 10971 / SI).